We begin with the raw amino-acid sequence, 476 residues long: Siroheme synthase (476 aa).

Positions 1-207 are precorrin-2 dehydrogenase /sirohydrochlorin ferrochelatase; it reads MTANVLFPLF…QRHAEAEAVL (207 aa). NAD(+) is bound by residues 25-26 and 46-47; these read KV and PS. The residue at position 132 (Ser-132) is a Phosphoserine. A uroporphyrinogen-III C-methyltransferase region spans residues 220-476; sequence GSVTLVGAGA…SAPCPPALIL (257 aa). The active-site Proton acceptor is the Asp-252. Lys-274 (proton donor) is an active-site residue. S-adenosyl-L-methionine-binding positions include 305–307, Val-310, 335–336, Met-387, and Gly-416; these read GGD and TA.

This sequence in the N-terminal section; belongs to the precorrin-2 dehydrogenase / sirohydrochlorin ferrochelatase family. It in the C-terminal section; belongs to the precorrin methyltransferase family.

The enzyme catalyses uroporphyrinogen III + 2 S-adenosyl-L-methionine = precorrin-2 + 2 S-adenosyl-L-homocysteine + H(+). It catalyses the reaction precorrin-2 + NAD(+) = sirohydrochlorin + NADH + 2 H(+). It carries out the reaction siroheme + 2 H(+) = sirohydrochlorin + Fe(2+). It functions in the pathway cofactor biosynthesis; adenosylcobalamin biosynthesis; precorrin-2 from uroporphyrinogen III: step 1/1. It participates in cofactor biosynthesis; adenosylcobalamin biosynthesis; sirohydrochlorin from precorrin-2: step 1/1. The protein operates within porphyrin-containing compound metabolism; siroheme biosynthesis; precorrin-2 from uroporphyrinogen III: step 1/1. Its pathway is porphyrin-containing compound metabolism; siroheme biosynthesis; siroheme from sirohydrochlorin: step 1/1. It functions in the pathway porphyrin-containing compound metabolism; siroheme biosynthesis; sirohydrochlorin from precorrin-2: step 1/1. Multifunctional enzyme that catalyzes the SAM-dependent methylations of uroporphyrinogen III at position C-2 and C-7 to form precorrin-2 via precorrin-1. Then it catalyzes the NAD-dependent ring dehydrogenation of precorrin-2 to yield sirohydrochlorin. Finally, it catalyzes the ferrochelation of sirohydrochlorin to yield siroheme. The sequence is that of Siroheme synthase from Xylella fastidiosa (strain 9a5c).